We begin with the raw amino-acid sequence, 391 residues long: Tryptophan synthase beta chain (391 aa).

Residue Lys84 is modified to N6-(pyridoxal phosphate)lysine.

Belongs to the TrpB family. In terms of assembly, tetramer of two alpha and two beta chains. The cofactor is pyridoxal 5'-phosphate.

It catalyses the reaction (1S,2R)-1-C-(indol-3-yl)glycerol 3-phosphate + L-serine = D-glyceraldehyde 3-phosphate + L-tryptophan + H2O. It participates in amino-acid biosynthesis; L-tryptophan biosynthesis; L-tryptophan from chorismate: step 5/5. Its function is as follows. The beta subunit is responsible for the synthesis of L-tryptophan from indole and L-serine. This chain is Tryptophan synthase beta chain, found in Thermoanaerobacter pseudethanolicus (strain ATCC 33223 / 39E) (Clostridium thermohydrosulfuricum).